The sequence spans 200 residues: Adenylyl-sulfate kinase (200 aa).

36–43 contacts ATP; sequence GLSGSGKS. Residue Ser-110 is the Phosphoserine intermediate of the active site.

It belongs to the APS kinase family.

It carries out the reaction adenosine 5'-phosphosulfate + ATP = 3'-phosphoadenylyl sulfate + ADP + H(+). It participates in sulfur metabolism; hydrogen sulfide biosynthesis; sulfite from sulfate: step 2/3. Catalyzes the synthesis of activated sulfate. This chain is Adenylyl-sulfate kinase, found in Clostridium acetobutylicum (strain ATCC 824 / DSM 792 / JCM 1419 / IAM 19013 / LMG 5710 / NBRC 13948 / NRRL B-527 / VKM B-1787 / 2291 / W).